We begin with the raw amino-acid sequence, 260 residues long: 5'-nucleotidase SurE (260 aa).

A divalent metal cation contacts are provided by Asp8, Asp9, Ser39, and Asn91.

This sequence belongs to the SurE nucleotidase family. It depends on a divalent metal cation as a cofactor.

It is found in the cytoplasm. It carries out the reaction a ribonucleoside 5'-phosphate + H2O = a ribonucleoside + phosphate. In terms of biological role, nucleotidase that shows phosphatase activity on nucleoside 5'-monophosphates. This Acidovorax ebreus (strain TPSY) (Diaphorobacter sp. (strain TPSY)) protein is 5'-nucleotidase SurE.